Here is a 153-residue protein sequence, read N- to C-terminus: MAYYNTLALLTIFIFSGAFHRAQGTHGEADSKCPLMVKVLDAVRGIPAAKLPVKVFKQNEDKSWDLISSGTTSSDGEIHNLATEEQFVEGIYKLEFATKRFWSKLGLTPFHEYVDVVFTANDAGHRHYTTAVLLTPYSFSTTAVVSDVKEAHV.

An N-terminal signal peptide occupies residues 1–24 (MAYYNTLALLTIFIFSGAFHRAQG). Sulfocysteine is present on Cys-33. The L-thyroxine site is built by Lys-38, Glu-77, and Ser-140.

The protein belongs to the transthyretin family. Homotetramer. Dimer of dimers. In the homotetramer, subunits assemble around a central channel that can accommodate two ligand molecules. Interacts with RBP4. In terms of processing, sulfonation of the reactive cysteine Cys-33 enhances the stability of the native conformation of TTR, avoiding misassembly of the protein leading to amyloid formation. As to expression, detected in plasma (at protein level). Expressed during metamorphosis in tadpole liver but not in tadpole brain, nor adult liver.

It localises to the secreted. Thyroid hormone-binding protein, with a much higher binding affinity for triiodothyronine (T3) than for thyroxine (T4). Probably transports triiodothyronine from the bloodstream to the brain. This is Transthyretin from Aquarana catesbeiana (American bullfrog).